Reading from the N-terminus, the 245-residue chain is 1-(5-phosphoribosyl)-5-[(5-phosphoribosylamino)methylideneamino] imidazole-4-carboxamide isomerase (245 aa).

D7 functions as the Proton acceptor in the catalytic mechanism. D129 acts as the Proton donor in catalysis.

This sequence belongs to the HisA/HisF family.

It localises to the cytoplasm. The enzyme catalyses 1-(5-phospho-beta-D-ribosyl)-5-[(5-phospho-beta-D-ribosylamino)methylideneamino]imidazole-4-carboxamide = 5-[(5-phospho-1-deoxy-D-ribulos-1-ylimino)methylamino]-1-(5-phospho-beta-D-ribosyl)imidazole-4-carboxamide. Its pathway is amino-acid biosynthesis; L-histidine biosynthesis; L-histidine from 5-phospho-alpha-D-ribose 1-diphosphate: step 4/9. This chain is 1-(5-phosphoribosyl)-5-[(5-phosphoribosylamino)methylideneamino] imidazole-4-carboxamide isomerase, found in Shewanella sp. (strain ANA-3).